The following is an 839-amino-acid chain: NT-3 growth factor receptor (839 aa).

A signal peptide spans 1 to 31; sequence MDVSLCPAKCSFWRIFLLGSVWLDYVGSVLA. Disulfide bonds link C32-C38 and C36-C45. The Extracellular segment spans residues 32–429; that stretch reads CPANCVCSKT…TVTHKPEEDT (398 aa). 2 N-linked (GlcNAc...) asparagine glycosylation sites follow: N72 and N79. 2 LRR repeats span residues 104–125 and 128–149; these read GLQKLTIKNSGLRSIQPRAFAK and HLRYINLSSNRLTTLSWQLFQT. N133 and N163 each carry an N-linked (GlcNAc...) asparagine glycan. The LRRCT domain maps to 160 to 209; the sequence is NFFNCSCDIRWMQLWQEQGEAKLNSQNLYCINADGSQLPLFRMNISQCDL. 2 disulfides stabilise this stretch: C164-C189 and C166-C207. N-linked (GlcNAc...) asparagine glycans are attached at residues N203, N218, N232, N259, N267, N272, and N294. Ig-like C2-type domains lie at 210 to 300 and 309 to 382; these read PEIS…VALT and SLEE…IAKN. C231 and C284 form a disulfide bridge. C320 and C362 are disulfide-bonded. N-linked (GlcNAc...) asparagine glycans are attached at residues N375 and N388. A helical transmembrane segment spans residues 430–453; the sequence is FGVSIAVGLAAFACVLLVVLFVMI. The Cytoplasmic segment spans residues 454 to 839; sequence NKYGRRSKFG…ATPIYLDILG (386 aa). The residue at position 493 (S493) is a Phosphoserine. Y516 carries the phosphotyrosine; by autocatalysis modification. Positions 538–839 constitute a Protein kinase domain; the sequence is IVLKRELGEG…ATPIYLDILG (302 aa). Residues 544-552 and K572 each bind ATP; that span reads LGEGAFGKV. Catalysis depends on D679, which acts as the Proton acceptor. Y705, Y709, and Y710 each carry phosphotyrosine; by autocatalysis.

The protein belongs to the protein kinase superfamily. Tyr protein kinase family. Insulin receptor subfamily. Exists in a dynamic equilibrium between monomeric (low affinity) and dimeric (high affinity) structures. Binds SH2B2. Interacts with SQSTM1 and KIDINS220. Interacts with PTPRS. Interacts with MAPK8IP3/JIP3. Post-translationally, ligand-mediated auto-phosphorylation. As to expression, widely expressed but mainly in nervous tissue. Isoform 2 is expressed at higher levels in adult brain than in fetal brain.

Its subcellular location is the membrane. The catalysed reaction is L-tyrosyl-[protein] + ATP = O-phospho-L-tyrosyl-[protein] + ADP + H(+). Receptor tyrosine kinase involved in nervous system and probably heart development. Upon binding of its ligand NTF3/neurotrophin-3, NTRK3 autophosphorylates and activates different signaling pathways, including the phosphatidylinositol 3-kinase/AKT and the MAPK pathways, that control cell survival and differentiation. The polypeptide is NT-3 growth factor receptor (NTRK3) (Homo sapiens (Human)).